A 255-amino-acid polypeptide reads, in one-letter code: Ribonuclease HII (255 aa).

An RNase H type-2 domain is found at 72 to 255; the sequence is AIICGIDEVG…KSFEPIKSLL (184 aa). The a divalent metal cation site is built by Asp78, Glu79, and Asp170.

Belongs to the RNase HII family. Mn(2+) is required as a cofactor. Requires Mg(2+) as cofactor.

It is found in the cytoplasm. It carries out the reaction Endonucleolytic cleavage to 5'-phosphomonoester.. In terms of biological role, endonuclease that specifically degrades the RNA of RNA-DNA hybrids. The protein is Ribonuclease HII of Staphylococcus aureus (strain MSSA476).